We begin with the raw amino-acid sequence, 213 residues long: Ribosomal RNA small subunit methyltransferase G (213 aa).

S-adenosyl-L-methionine contacts are provided by residues Gly-75, Phe-80, 128 to 129 (IE), and Arg-144.

The protein belongs to the methyltransferase superfamily. RNA methyltransferase RsmG family.

It localises to the cytoplasm. The enzyme catalyses guanosine(527) in 16S rRNA + S-adenosyl-L-methionine = N(7)-methylguanosine(527) in 16S rRNA + S-adenosyl-L-homocysteine. In terms of biological role, specifically methylates the N7 position of guanine in position 527 of 16S rRNA. The sequence is that of Ribosomal RNA small subunit methyltransferase G from Brucella abortus (strain S19).